The primary structure comprises 349 residues: S-adenosylmethionine:tRNA ribosyltransferase-isomerase (349 aa).

The protein belongs to the QueA family. As to quaternary structure, monomer.

It localises to the cytoplasm. It carries out the reaction 7-aminomethyl-7-carbaguanosine(34) in tRNA + S-adenosyl-L-methionine = epoxyqueuosine(34) in tRNA + adenine + L-methionine + 2 H(+). It functions in the pathway tRNA modification; tRNA-queuosine biosynthesis. Functionally, transfers and isomerizes the ribose moiety from AdoMet to the 7-aminomethyl group of 7-deazaguanine (preQ1-tRNA) to give epoxyqueuosine (oQ-tRNA). The sequence is that of S-adenosylmethionine:tRNA ribosyltransferase-isomerase from Pseudomonas putida (strain W619).